Here is a 158-residue protein sequence, read N- to C-terminus: Transcription elongation factor GreA (158 aa).

The protein belongs to the GreA/GreB family.

Functionally, necessary for efficient RNA polymerase transcription elongation past template-encoded arresting sites. The arresting sites in DNA have the property of trapping a certain fraction of elongating RNA polymerases that pass through, resulting in locked ternary complexes. Cleavage of the nascent transcript by cleavage factors such as GreA or GreB allows the resumption of elongation from the new 3'terminus. GreA releases sequences of 2 to 3 nucleotides. The chain is Transcription elongation factor GreA from Pelagibacter ubique (strain HTCC1062).